Here is a 906-residue protein sequence, read N- to C-terminus: Protein translocase subunit SecA (906 aa).

ATP contacts are provided by residues glutamine 86, 104–108 (GEGKT), and aspartate 511. Composition is skewed to basic and acidic residues over residues 853–865 (HESVIDNNQRHDE) and 877–888 (VRREGPKVKRND). The interval 853-906 (HESVIDNNQRHDEDEQEETPKVQQVRREGPKVKRNDPCPCGSGKKYKQCHGKVE) is disordered. The Zn(2+) site is built by cysteine 890, cysteine 892, cysteine 901, and histidine 902. Residues 896–906 (KKYKQCHGKVE) show a composition bias toward basic residues.

It belongs to the SecA family. As to quaternary structure, monomer and homodimer. Part of the essential Sec protein translocation apparatus which comprises SecA, SecYEG and auxiliary proteins SecDF-YajC and YidC. It depends on Zn(2+) as a cofactor.

Its subcellular location is the cell inner membrane. The protein localises to the cytoplasm. The enzyme catalyses ATP + H2O + cellular proteinSide 1 = ADP + phosphate + cellular proteinSide 2.. Functionally, part of the Sec protein translocase complex. Interacts with the SecYEG preprotein conducting channel. Has a central role in coupling the hydrolysis of ATP to the transfer of proteins into and across the cell membrane, serving both as a receptor for the preprotein-SecB complex and as an ATP-driven molecular motor driving the stepwise translocation of polypeptide chains across the membrane. The sequence is that of Protein translocase subunit SecA from Francisella tularensis subsp. novicida (strain U112).